The sequence spans 598 residues: uncharacterized protein (598 aa).

Residues 1–19 (MSVPLRFSTPSSSPSASDN) are compositionally biased toward low complexity. Disordered stretches follow at residues 1-54 (MSVP…MRPK), 139-176 (QKNQ…PNWK), and 194-279 (EAQL…ITMP). The Cytoplasmic segment spans residues 1 to 313 (MSVPLRFSTP…CKIRHFFREG (313 aa)). The segment covering 30–48 (ELDTFNTTDVPRRVNTTKA) has biased composition (polar residues). Low complexity predominate over residues 147–165 (RANSRVNSRANSRANSSVS). Composition is skewed to polar residues over residues 218-242 (FSLQ…SSAI) and 255-276 (PRNN…SQDI). Residues 314-334 (FAEFLGTLVLVVFGVGSNLQA) traverse the membrane as a helical segment. The Extracellular portion of the chain corresponds to 335-346 (TVTNGAGGSFES). Residues 347 to 367 (LSFAWGFGCMLGVYIAGGISG) form a helical membrane-spanning segment. The Cytoplasmic segment spans residues 368–388 (GHVNPAVTISLAIFRKFPWYK). An NPA 1 motif is present at residues 371 to 373 (NPA). Residues 389 to 409 (VPIYIFFQIWGAFFGGALAYG) traverse the membrane as a helical segment. Residues 410–444 (YHWSSITEFEGGKDIRTPATGGCLYTNPKPYVTWR) lie on the Extracellular side of the membrane. The helical transmembrane segment at 445–465 (NAFFDEFIGTAVLVGCLFAIL) threads the bilayer. Topologically, residues 466–473 (DDTNSPPT) are cytoplasmic. The helical transmembrane segment at 474-494 (QGMTAFIVGLLIAAIGMALGY) threads the bilayer. At 495–532 (QTSFTLNPARDLGPRMFAWWIGYGPHSFHLYHWWWTWG) the chain is on the extracellular side. An NPA 2 motif is present at residues 501-503 (NPA). Residues 533–553 (AWGGTIGGGIAGGLIYDLVIF) traverse the membrane as a helical segment. The Cytoplasmic segment spans residues 554–598 (TGPESPLNYPDNGFIDKKVHQITAKFEKEEEVENLEKTDSPIENN).

This sequence belongs to the MIP/aquaporin (TC 1.A.8) family.

The protein localises to the membrane. This is an uncharacterized protein from Schizosaccharomyces pombe (strain 972 / ATCC 24843) (Fission yeast).